Here is a 408-residue protein sequence, read N- to C-terminus: Photox toxin (408 aa).

The interval 168 to 196 is disordered; sequence NNQQHIKDSDGRKPVNNMPPPPPPPMADK. A compositionally biased stretch (pro residues) spans 184–193; that stretch reads NMPPPPPPPM. The 204-residue stretch at 190-393 folds into the TR mART core domain; it reads PPPMADKTQK…LRLTDDASAD (204 aa). Active-site residues include Arg-288, Ser-318, and Glu-355.

This sequence in the C-terminal section; belongs to the SpvB family.

The catalysed reaction is L-arginyl-[protein] + NAD(+) = N(omega)-(ADP-D-ribosyl)-L-arginyl-[protein] + nicotinamide + H(+). In terms of biological role, mono-ADP-ribosylates chicken skeletal alpha-actin and human non-skeletal beta- and gamma-actin. Mono-ADP-ribosylates 'Arg-177' of yeast actin, blocking its ability to polymerize. Does not possess NAD(+)-glycohydrolase activity, unlike most mART enzymes. Upon expression in S.cerevisiae almost completely inhibits growth. This is Photox toxin (phxA) from Photorhabdus laumondii subsp. laumondii (strain DSM 15139 / CIP 105565 / TT01) (Photorhabdus luminescens subsp. laumondii).